A 469-amino-acid polypeptide reads, in one-letter code: UDP-N-acetylmuramate--L-alanine ligase (469 aa).

Residue 113–119 (GAHGKTT) participates in ATP binding.

This sequence belongs to the MurCDEF family.

Its subcellular location is the cytoplasm. The catalysed reaction is UDP-N-acetyl-alpha-D-muramate + L-alanine + ATP = UDP-N-acetyl-alpha-D-muramoyl-L-alanine + ADP + phosphate + H(+). It functions in the pathway cell wall biogenesis; peptidoglycan biosynthesis. Cell wall formation. This is UDP-N-acetylmuramate--L-alanine ligase from Syntrophobacter fumaroxidans (strain DSM 10017 / MPOB).